Reading from the N-terminus, the 271-residue chain is MGLAATRTKQRFGLDPRNTAWSNDTSRFGHQFLEKFGWKPGMGLGLYPMNSNTSHIKVSIKDDNVGLGAKLKRKDKKDEFDNGECAGLDVFQRILGRLNGKESKISEELDTQRKQKIIDGKWGIHFVKGEVLASTWDPKTHKLRNYSNAKKRKREGDDSEDEDDDDKEDKDSDKKKHKKHKKHKKDKKKDKKDKKEHKKHKKEEKRLKKEKRAEKTKETKKTSKLKSSESASNIPDAVNTRLSVRSKWIKQKRAALMDSKALNEIFMITND.

The region spanning 25 to 72 (TSRFGHQFLEKFGWKPGMGLGLYPMNSNTSHIKVSIKDDNVGLGAKLK) is the G-patch domain. Positions 147–239 (SNAKKRKREG…SASNIPDAVN (93 aa)) are disordered. Over residues 157 to 168 (DDSEDEDDDDKE) the composition is skewed to acidic residues. A compositionally biased stretch (basic residues) spans 175–203 (KKHKKHKKHKKDKKKDKKDKKEHKKHKKE). A compositionally biased stretch (basic and acidic residues) spans 204 to 221 (EKRLKKEKRAEKTKETKK). The residue at position 230 (Ser230) is a Phosphoserine.

This sequence belongs to the PINX1 family. In terms of assembly, interacts with EST2.

It localises to the nucleus. The protein localises to the nucleolus. Its function is as follows. Involved in rRNA-processing at A0, A1 and A2 sites through its action in U18 and U24 snoRNA 3'-end final trimming. Negative regulator of telomerase throughX competition for binding to EST2 with TLC1. The protein is Protein PXR1 (PXR1) of Saccharomyces cerevisiae (strain YJM789) (Baker's yeast).